A 265-amino-acid chain; its full sequence is MTLRLKQAFLHHTNGVEALRGVDLQIEAGEQVAIIGPSGAGKSSLLNMLATAIRPSSGDIEVLGERAWHLSARQRQRLRARIGLVHQAPPLPPRQRVVTAVLAGKLGQWSLGKSLINLLHPLDVPGARAALAKLDLADKLFSQCQQLSGGQLQRVGIARVLYQAPEVLLADEPVSAMDPVLAGHTLSILSRHAREHNVTLVASLHAVELALAHFPRIVGLREGRILFDCPSAQVSRDMLDTLYANEQLQSPAPAVTPLIVQIPRC.

Positions 3-247 (LRLKQAFLHH…MLDTLYANEQ (245 aa)) constitute an ABC transporter domain. Residue 36 to 43 (GPSGAGKS) coordinates ATP.

The protein belongs to the ABC transporter superfamily. Phosphonates importer (TC 3.A.1.9.1) family. As to quaternary structure, the complex is composed of two ATP-binding proteins (PhnC), two transmembrane proteins (PhnE) and a solute-binding protein (PhnD).

It localises to the cell inner membrane. It catalyses the reaction phosphonate(out) + ATP + H2O = phosphonate(in) + ADP + phosphate + H(+). Functionally, part of the ABC transporter complex PhnCDE involved in phosphonates import. Responsible for energy coupling to the transport system. This is Phosphonates import ATP-binding protein PhnC from Pseudomonas fluorescens (strain Pf0-1).